The following is a 228-amino-acid chain: Rab-like protein 2B (228 aa).

GTP is bound by residues 28 to 35 (GDSAVGKS), 76 to 80 (DTAGQ), and 133 to 136 (NKID). Residues 200-228 (LEQEEEDVPDQEQSSSIETPSEEAASPHS) are disordered.

The protein belongs to the small GTPase superfamily. Rab family. As to quaternary structure, interacts (in its GTP-bound form) with CEP19 (via residues 121-150); this interaction is required for its localization to the mother centriole and cilium basal body. Interacts (in its GTP-bound form) with the intraflagellar transport (IFT) complex B (via the IFT74-IFT81 heterodimer). Binding to CEP19 and the IFT74-IFT81 heterodimer is mutually exclusive. In terms of tissue distribution, expressed in the testis.

Its subcellular location is the cytoplasm. It localises to the cytoskeleton. The protein localises to the microtubule organizing center. The protein resides in the centrosome. It is found in the centriole. Its subcellular location is the cilium basal body. Its function is as follows. Small GTPase required for ciliation. Activated in a guanine nucleotide exchange factor (GEF)-independent manner via its intrinsic GDP for GTP nucleotide exchange ability. Involved in ciliary assembly by binding the intraflagellar transport (IFT) complex B from the large pool pre-docked at the base of the cilium and thus triggers its entry into the cilia. This Homo sapiens (Human) protein is Rab-like protein 2B (RABL2B).